Here is a 416-residue protein sequence, read N- to C-terminus: Notoamide biosynthesis cluster protein N' (416 aa).

Residues 1-16 (MRAALLTLAFTALAAA) form the signal peptide. N-linked (GlcNAc...) asparagine glycosylation is found at asparagine 119 and asparagine 262.

Part of the gene cluster that mediates the biosynthesis of notoamide, a fungal indole alkaloid that belongs to a family of natural products containing a characteristic bicyclo[2.2.2]diazaoctane core. The first step of notoamide biosynthesis involves coupling of L-proline and L-tryptophan by the bimodular NRPS notE', to produce cyclo-L-tryptophan-L-proline called brevianamide F. The reverse prenyltransferase notF' then acts as a deoxybrevianamide E synthase and converts brevianamide F to deoxybrevianamide E via reverse prenylation at C-2 of the indole ring leading to the bicyclo[2.2.2]diazaoctane core. Deoxybrevianamide E is further hydroxylated at C-6 of the indole ring, likely catalyzed by the cytochrome P450 monooxygenase notG', to yield 6-hydroxy-deoxybrevianamide E. 6-hydroxy-deoxybrevianamide E is a specific substrate of the prenyltransferase notC' for normal prenylation at C-7 to produce 6-hydroxy-7-prenyl-deoxybrevianamide, also called notoamide S. As the proposed pivotal branching point in notoamide biosynthesis, notoamide S can be diverted to notoamide E through an oxidative pyran ring closure putatively catalyzed by either notH' cytochrome P450 monooxygenase or the notD' FAD-linked oxidoreductase. This step would be followed by an indole 2,3-epoxidation-initiated pinacol-like rearrangement catalyzed by the notB' FAD-dependent monooxygenase leading to the formation of notoamide C and notoamide D. On the other hand notoamide S is converted to notoamide T by notH' (or notD'), a bifunctional oxidase that also functions as the intramolecular Diels-Alderase responsible for generation of (-)-notoamide T. To generate antipodal (+)-notoaminide T, notH (or notD) in Aspergillus strain MF297-2 is expected to catalyze a Diels-Alder reaction leading to the opposite stereochemistry. The remaining oxidoreductase notD' (or notH') likely catalyzes the oxidative pyran ring formation to yield (-)-stephacidin A. The FAD-dependent monooxygenase notI' is highly similar to notB' and is predicted to catalyze a similar conversion from (-)-stephacidin A to (+)-notoamide B via the 2,3-epoxidation of (-)-stephacidin A followed by a pinacol-type rearrangement. Finally, it remains unclear which enzyme could be responsible for the final hydroxylation steps leading to notoamide A and sclerotiamide. The function of notN' in the notoamide biosynthesis has not been determined yet. The polypeptide is Notoamide biosynthesis cluster protein N' (Aspergillus versicolor).